Reading from the N-terminus, the 102-residue chain is Bowman-Birk type wound-induced proteinase inhibitor WIP1 (102 aa).

Positions 1–15 (MKSSPHLVLILCLQA) are cleaved as a signal peptide. 5 cysteine pairs are disulfide-bonded: Cys46-Cys102, Cys47-Cys60, Cys50-Cys98, Cys67-Cys74, and Cys71-Cys90.

This sequence belongs to the Bowman-Birk serine protease inhibitor family.

The polypeptide is Bowman-Birk type wound-induced proteinase inhibitor WIP1 (WIP1) (Zea mays (Maize)).